Reading from the N-terminus, the 474-residue chain is MSEESDGKLIEDSLIQLRCHFTWKLLIEAPEIPDLENRIWEEIQFLDTKYNVGIHNLLAYVKHLKGQNEEALVSLKKAEDLIQKEHANQADIRSLVTWGNFAWVYYHMGRLAEAQTYLDKVENTCKKFANPSRYRMECPEVDCEEGWALAKCGGKNYERAKTCFEKALEGNPENPEFNTGYAITVYRLDKFNTASGRNKAFSLHVLKRAVRLNPDDVYIRVLLALKLQDEGQEAEGEKYIEEALTSISSQAYVFQYAAKFYRRKGSVDKALELLKMALETTPTSAFLHHQMGLCYRAQMIQIKEATNWQPRGQDRETVDRLVQLAICKFEKTIMLKRTFEMAYVDLAETYAEIGHHRKAEEHFQKGLRMKIFEDQLKQEIHYHYGRFQEHHGKSQDKAITHYLKGLKIEKMSHSREKLLNALEKLAKRCIHQNVRVVESVSLLGLIHKLKGEVSDALLCYERALRLAADLNPIF.

TPR repeat units follow at residues 52-85, 95-128, 141-174, 182-216, 218-250, 251-284, 305-339, 340-373, 378-412, and 437-470; these read VGIHNLLAYVKHLKGQNEEALVSLKKAEDLIQKE, LVTWGNFAWVYYHMGRLAEAQTYLDKVENTCKKF, VDCEEGWALAKCGGKNYERAKTCFEKALEGNPEN, AITVYRLDKFNTASGRNKAFSLHVLKRAVRLNPDD, YIRVLLALKLQDEGQEAEGEKYIEEALTSISSQ, AYVFQYAAKFYRRKGSVDKALELLKMALETTPTS, ATNWQPRGQDRETVDRLVQLAICKFEKTIMLKRTF, EMAYVDLAETYAEIGHHRKAEEHFQKGLRMKIFE, QEIHYHYGRFQEHHGKSQDKAITHYLKGLKIEKMS, and VESVSLLGLIHKLKGEVSDALLCYERALRLAADL.

It belongs to the IFIT family.

IFIT1B is likely non-functional, lacking the critical antiviral role of IFIT1. Unlike IFIT1, which is essential in the innate immune response as part of an interferon-dependent multiprotein complex, IFIT1B does not prevent the translation of viral RNAs that lack host-specific 2'-O-methylation at their 5' cap. Consequently, it probably cannot inhibit their translation by competing with the host translation machinery. In Homo sapiens (Human), this protein is Protein IFIT1 homolog B.